Here is a 228-residue protein sequence, read N- to C-terminus: 6-carboxyhexanoate--CoA ligase (228 aa).

This sequence belongs to the BioW family. In terms of assembly, homodimer. Mg(2+) is required as a cofactor.

It carries out the reaction heptanedioate + ATP + CoA = 6-carboxyhexanoyl-CoA + AMP + diphosphate. It participates in metabolic intermediate metabolism; pimeloyl-CoA biosynthesis; pimeloyl-CoA from pimelate: step 1/1. In terms of biological role, catalyzes the transformation of pimelate into pimeloyl-CoA with concomitant hydrolysis of ATP to AMP. This is 6-carboxyhexanoate--CoA ligase from Staphylococcus epidermidis (strain ATCC 35984 / DSM 28319 / BCRC 17069 / CCUG 31568 / BM 3577 / RP62A).